Consider the following 118-residue polypeptide: uncharacterized protein (118 aa).

Residues 98 to 118 (KGKGNEGREEAEEPLEEPEEG) are disordered. A compositionally biased stretch (acidic residues) spans 106 to 118 (EEAEEPLEEPEEG).

Belongs to the UPF0440 family.

This is an uncharacterized protein from Pyrococcus abyssi (strain GE5 / Orsay).